Consider the following 156-residue polypeptide: Small ribosomal subunit protein uS7c (156 aa).

Belongs to the universal ribosomal protein uS7 family. In terms of assembly, part of the 30S ribosomal subunit.

Its subcellular location is the plastid. The protein resides in the chloroplast. One of the primary rRNA binding proteins, it binds directly to 16S rRNA where it nucleates assembly of the head domain of the 30S subunit. In Bowenia serrulata (Byfield fern), this protein is Small ribosomal subunit protein uS7c (rps7).